The primary structure comprises 218 residues: N-(5'-phosphoribosyl)anthranilate isomerase (218 aa).

It belongs to the TrpF family.

It carries out the reaction N-(5-phospho-beta-D-ribosyl)anthranilate = 1-(2-carboxyphenylamino)-1-deoxy-D-ribulose 5-phosphate. It participates in amino-acid biosynthesis; L-tryptophan biosynthesis; L-tryptophan from chorismate: step 3/5. The protein is N-(5'-phosphoribosyl)anthranilate isomerase of Acetivibrio thermocellus (strain ATCC 27405 / DSM 1237 / JCM 9322 / NBRC 103400 / NCIMB 10682 / NRRL B-4536 / VPI 7372) (Clostridium thermocellum).